Reading from the N-terminus, the 123-residue chain is Potassium voltage-gated channel subfamily E member 2 (123 aa).

N-linked (GlcNAc...) asparagine glycans are attached at residues Asn6 and Asn29. A helical membrane pass occupies residues 49 to 69 (VILYLMVMIGMFSFIIVAILV). Over 70–123 (STVKSKRREHSNDPYHQYIVEDWQEKYKSQILNLEESKATIHENIGAAGFKMSP) the chain is Cytoplasmic.

This sequence belongs to the potassium channel KCNE family. Interacts with KCNB1. Associates with KCNH2/ERG1. May associate with KCNQ2 and KCNQ3. Associates with HCN1 and probably HCN2. Heteromultimer with KCNC2. Interacts with KCNC2. Interacts with KCNQ1; forms a heterooligomer complex that targets to the membrane raft and leading to currents with an apparently instantaneous activation, a rapid deactivation process and a linear current-voltage relationship and decreases the amplitude of the outward current. As to expression, highly expressed in brain, heart, skeletal muscle, pancreas, placenta, kidney, colon and thymus. A small but significant expression is found in liver, ovary, testis, prostate, small intestine and leukocytes. Very low expression, nearly undetectable, in lung and spleen.

It localises to the cell membrane. It is found in the apical cell membrane. Ancillary protein that functions as a regulatory subunit of the voltage-gated potassium (Kv) channel complex composed of pore-forming and potassium-conducting alpha subunits and of regulatory beta subunits. KCNE2 beta subunit modulates the gating kinetics and enhances stability of the channel complex. Alters the gating of the delayed rectifier Kv channel containing KCNB1 alpha subunit. Associates with KCNH2/HERG alpha subunit Kv channel to form the rapidly activating component of the delayed rectifying potassium current (IKr) in heart. May associate with KCNQ2 and/or KCNQ3 alpha subunits to modulate the native M-type current. May associate with HCN1 and HCN2 channel subunits to increase potassium current. Forms a heterooligomer complex with KCNQ1/KVLQT1 alpha subunits which leads to currents with an apparently instantaneous activation, a rapid deactivation process and a linear current-voltage relationship and decreases the amplitude of the outward current. KCNQ1-KCNE2 channel associates with Na(+)-coupled myo-inositol symporter in the apical membrane of choroid plexus epithelium and regulates the myo-inositol gradient between blood and cerebrospinal fluid with an impact on neuron excitability. The sequence is that of Potassium voltage-gated channel subfamily E member 2 from Homo sapiens (Human).